Consider the following 331-residue polypeptide: UPF0194 membrane protein YbhG (331 aa).

Residues 1 to 19 (MKKPVVIGLAIAAIVAVIA) form the signal peptide. Residues 107–208 (EEIAQAAAAV…LDLQDTTLIA (102 aa)) adopt a coiled-coil conformation.

The protein belongs to the UPF0194 family.

It is found in the periplasm. In Salmonella paratyphi A (strain ATCC 9150 / SARB42), this protein is UPF0194 membrane protein YbhG.